Here is a 308-residue protein sequence, read N- to C-terminus: D-alanine--D-alanine ligase (308 aa).

The ATP-grasp domain occupies 109 to 302; the sequence is KAAYAAAGLP…FGALCRWIVE (194 aa). 136 to 186 contacts ATP; the sequence is MPPPYVIKPYNEGSSVGVYLVPEGAEAAPELADDLPDTLMVEAFVPGRELT. Residues aspartate 253, glutamate 269, and asparagine 271 each coordinate Mg(2+).

This sequence belongs to the D-alanine--D-alanine ligase family. Requires Mg(2+) as cofactor. Mn(2+) is required as a cofactor.

The protein localises to the cytoplasm. It carries out the reaction 2 D-alanine + ATP = D-alanyl-D-alanine + ADP + phosphate + H(+). It participates in cell wall biogenesis; peptidoglycan biosynthesis. In terms of biological role, cell wall formation. This chain is D-alanine--D-alanine ligase, found in Dinoroseobacter shibae (strain DSM 16493 / NCIMB 14021 / DFL 12).